The following is a 276-amino-acid chain: Large ribosomal subunit protein uL2 (276 aa).

The disordered stretch occupies residues 203-276 (NVSSGKAGRT…SDKFIVKRRK (74 aa)). Basic residues predominate over residues 210–220 (GRTRWLGRRPQ). Basic and acidic residues predominate over residues 265 to 276 (KPSDKFIVKRRK).

It belongs to the universal ribosomal protein uL2 family. Part of the 50S ribosomal subunit. Forms a bridge to the 30S subunit in the 70S ribosome.

Its function is as follows. One of the primary rRNA binding proteins. Required for association of the 30S and 50S subunits to form the 70S ribosome, for tRNA binding and peptide bond formation. It has been suggested to have peptidyltransferase activity; this is somewhat controversial. Makes several contacts with the 16S rRNA in the 70S ribosome. The protein is Large ribosomal subunit protein uL2 of Coprothermobacter proteolyticus (strain ATCC 35245 / DSM 5265 / OCM 4 / BT).